A 429-amino-acid chain; its full sequence is Glutamate-1-semialdehyde 2,1-aminomutase 1 (429 aa).

Position 268 is an N6-(pyridoxal phosphate)lysine (Lys-268).

The protein belongs to the class-III pyridoxal-phosphate-dependent aminotransferase family. HemL subfamily. In terms of assembly, homodimer. Pyridoxal 5'-phosphate is required as a cofactor.

It localises to the cytoplasm. It catalyses the reaction (S)-4-amino-5-oxopentanoate = 5-aminolevulinate. It functions in the pathway porphyrin-containing compound metabolism; protoporphyrin-IX biosynthesis; 5-aminolevulinate from L-glutamyl-tRNA(Glu): step 2/2. This chain is Glutamate-1-semialdehyde 2,1-aminomutase 1, found in Staphylococcus saprophyticus subsp. saprophyticus (strain ATCC 15305 / DSM 20229 / NCIMB 8711 / NCTC 7292 / S-41).